The primary structure comprises 267 residues: Acetyl-coenzyme A carboxylase carboxyl transferase subunit beta, chloroplastic (267 aa).

The CoA carboxyltransferase N-terminal domain occupies 12-267; it reads LWKKCDSCNI…TIHMILDLHN (256 aa). Zn(2+)-binding residues include C16, C19, C35, and C38. A C4-type zinc finger spans residues 16-38; sequence CDSCNILISKFDFYKHDKVCPEC.

This sequence belongs to the AccD/PCCB family. Acetyl-CoA carboxylase is a heterohexamer composed of biotin carboxyl carrier protein, biotin carboxylase and 2 subunits each of ACCase subunit alpha and ACCase plastid-coded subunit beta (accD). The cofactor is Zn(2+).

Its subcellular location is the plastid. It localises to the chloroplast stroma. It catalyses the reaction N(6)-carboxybiotinyl-L-lysyl-[protein] + acetyl-CoA = N(6)-biotinyl-L-lysyl-[protein] + malonyl-CoA. It participates in lipid metabolism; malonyl-CoA biosynthesis; malonyl-CoA from acetyl-CoA: step 1/1. Functionally, component of the acetyl coenzyme A carboxylase (ACC) complex. Biotin carboxylase (BC) catalyzes the carboxylation of biotin on its carrier protein (BCCP) and then the CO(2) group is transferred by the transcarboxylase to acetyl-CoA to form malonyl-CoA. This Cyanidium caldarium (Red alga) protein is Acetyl-coenzyme A carboxylase carboxyl transferase subunit beta, chloroplastic.